The sequence spans 233 residues: Small ribosomal subunit protein uS7m (233 aa).

The transit peptide at 1–28 directs the protein to the mitochondrion; the sequence is MAAPTGKLLVHRIRAGLTCLTQVRWSRY.

This sequence belongs to the universal ribosomal protein uS7 family. Component of the mitochondrial ribosome small subunit (28S) which comprises a 12S rRNA and about 30 distinct proteins.

The protein resides in the mitochondrion. In Xenopus laevis (African clawed frog), this protein is Small ribosomal subunit protein uS7m (mrps7).